We begin with the raw amino-acid sequence, 305 residues long: MAREDSVKCLRCLLYALNLLFWLMSISVLAVSAWMRDYLNNVLTLTAETRVEEAVILTYFPVVHPVMIAVCCFLIIVGMLGYCGTVKRNLLLLAWYFGTLLVIFCVELACGVWTYEQEVMVPVQWSDMVTLKARMTNYGLPRYRWLTHAWNYFQREFKCCGVVYFTDWLEMTEMDWPPDSCCVREFPGCSKQAHQEDLSDLYQEGCGKKMYSFLRGTKQLQVLRFLGISIGVTQILAMILTITLLWALYYDRREPGTDQMLSLKNDTSQHLSCHSVELLKPSLSRIFEHTSMANSFNTHFEMEEL.

Residues methionine 1–cysteine 12 are Cytoplasmic-facing. 2 S-palmitoyl cysteine lipidation sites follow: cysteine 9 and cysteine 12. Residues leucine 13–alanine 33 traverse the membrane as a helical segment. Over tryptophan 34–tyrosine 59 the chain is Extracellular. The chain crosses the membrane as a helical span at residues phenylalanine 60–leucine 80. Residues glycine 81–asparagine 89 are Cytoplasmic-facing. The S-palmitoyl cysteine moiety is linked to residue cysteine 83. A helical transmembrane segment spans residues leucine 90–cysteine 110. The Extracellular segment spans residues glycine 111–arginine 224. The helical transmembrane segment at phenylalanine 225–leucine 245 threads the bilayer. Over tryptophan 246–leucine 305 the chain is Cytoplasmic.

This sequence belongs to the tetraspanin (TM4SF) family. In terms of assembly, interacts (when palmitoylated) with ADAM10. Interacts with MMP14/MT1-MMP. Component of a complex, at least composed of TSPAN12, FZD4 and norrin (NDP). Post-translationally, palmitoylated; required for interaction with ADAM10. In terms of tissue distribution, expressed in the neonatal retinal vasculature but not other retinal tissues. Also detected in the neonatal meningeal vasculature and in nonvascular cell types, such as the smooth muscle cells in the neonatal intestine.

The protein localises to the cell membrane. Functionally, regulator of cell surface receptor signal transduction. Acts as a regulator of membrane proteinases such as ADAM10 and MMP14/MT1-MMP. Activates ADAM10-dependent cleavage activity of amyloid precursor protein (APP). Activates MMP14/MT1-MMP-dependent cleavage activity. Plays a central role in retinal vascularization by regulating norrin (NDP) signal transduction. Acts in concert with norrin (NDP) to promote FZD4 multimerization and subsequent activation of FZD4, leading to promote accumulation of beta-catenin (CTNNB1) and stimulate LEF/TCF-mediated transcriptional programs. Suprisingly, it only activate the norrin (NDP)-dependent activation of FZD4, while it does not activate the Wnt-dependent activation of FZD4, suggesting the existence of a Wnt-independent signaling that also promote accumulation the beta-catenin (CTNNB1). The protein is Tetraspanin-12 (Tspan12) of Mus musculus (Mouse).